A 167-amino-acid chain; its full sequence is ATP synthase subunit delta, mitochondrial (167 aa).

The transit peptide at 1–28 (MFRLSNYMLRKSQFPQGLVRAPFGIRGY) directs the protein to the mitochondrion.

The protein belongs to the ATPase epsilon chain family. F-type ATPases have 2 components, CF(1) - the catalytic core - and CF(0) - the membrane proton channel. CF(1) has five subunits: alpha(3), beta(3), gamma(1), delta(1), epsilon(1). CF(0) has three main subunits: a, b and c.

It is found in the mitochondrion. It localises to the mitochondrion inner membrane. Functionally, mitochondrial membrane ATP synthase (F(1)F(0) ATP synthase or Complex V) produces ATP from ADP in the presence of a proton gradient across the membrane which is generated by electron transport complexes of the respiratory chain. F-type ATPases consist of two structural domains, F(1) - containing the extramembraneous catalytic core, and F(0) - containing the membrane proton channel, linked together by a central stalk and a peripheral stalk. During catalysis, ATP turnover in the catalytic domain of F(1) is coupled via a rotary mechanism of the central stalk subunits to proton translocation. Part of the complex F(1) domain and of the central stalk which is part of the complex rotary element. Rotation of the central stalk against the surrounding alpha(3)beta(3) subunits leads to hydrolysis of ATP in three separate catalytic sites on the beta subunits. This Schizosaccharomyces pombe (strain 972 / ATCC 24843) (Fission yeast) protein is ATP synthase subunit delta, mitochondrial (atp16).